The chain runs to 416 residues: D-amino acid dehydrogenase (416 aa).

3-17 provides a ligand contact to FAD; the sequence is VIVLGAGIVGVTSAY.

This sequence belongs to the DadA oxidoreductase family. Requires FAD as cofactor.

The enzyme catalyses a D-alpha-amino acid + A + H2O = a 2-oxocarboxylate + AH2 + NH4(+). It functions in the pathway amino-acid degradation; D-alanine degradation; NH(3) and pyruvate from D-alanine: step 1/1. Functionally, oxidative deamination of D-amino acids. The polypeptide is D-amino acid dehydrogenase (Rhizobium johnstonii (strain DSM 114642 / LMG 32736 / 3841) (Rhizobium leguminosarum bv. viciae)).